A 256-amino-acid chain; its full sequence is Protein CC2D2B homolog (256 aa).

The disordered stretch occupies residues 1–24; the sequence is MSEEMDNVTAEEITDKHLQKDLDA. A compositionally biased stretch (basic and acidic residues) spans 13-22; the sequence is ITDKHLQKDL. Coiled-coil stretches lie at residues 136-159 and 194-214; these read DLLK…KANI and EIYK…EEGK.

The chain is Protein CC2D2B homolog from Macaca fascicularis (Crab-eating macaque).